We begin with the raw amino-acid sequence, 428 residues long: Aerobic C4-dicarboxylate transport protein (428 aa).

8 helical membrane-spanning segments follow: residues 5–27 (LFKSLYFQVLTAIAIGILLGHFY), 47–64 (MIIAPVIFCTVVTGIAGM), 77–99 (ALLYFEIVSTIALIIGLIIVNVV), 141–163 (VIGAFASGNILQVLLFAVLFGFA), 184–206 (VIFGIINMIMRLAPIGAFGAMAF), 219–241 (LGQLIICFYITCILFVVLVLGSI), 326–348 (IVHQITLLIVLLLSSKGAAGVTG), and 352–374 (IVLAATLSAVGHLPVAGLALILG).

This sequence belongs to the dicarboxylate/amino acid:cation symporter (DAACS) (TC 2.A.23) family.

It is found in the cell inner membrane. Its function is as follows. Responsible for the aerobic transport of the dicarboxylates fumarate and malate and to a lesser extent succinate, from the periplasm across the inner membrane. The polypeptide is Aerobic C4-dicarboxylate transport protein (Escherichia coli O157:H7).